Here is a 147-residue protein sequence, read N- to C-terminus: Protegrin-2 (147 aa).

The first 29 residues, 1-29, serve as a signal peptide directing secretion; sequence METQRASLCLGRWSLWLLLLALVVPSASA. Residues 30 to 130 constitute a propeptide that is removed on maturation; it reads QALSYREAVL…DITCNEVQGV (101 aa). The segment at 61–80 is disordered; that stretch reads DQPPKADEDPGTPKPVSFTV. 4 cysteine pairs are disulfide-bonded: Cys-85–Cys-96, Cys-107–Cys-124, Cys-136–Cys-145, and Cys-138–Cys-143. Position 146 is a valine amide (Val-146).

It belongs to the cathelicidin family.

It is found in the secreted. In terms of biological role, microbicidal activity. Active against E.coli, Listeria monocytogenes and C.albicans, in vitro. The sequence is that of Protegrin-2 (NPG2) from Sus scrofa (Pig).